A 255-amino-acid polypeptide reads, in one-letter code: Dehydrogenase/reductase SDR family member 11 (255 aa).

The N-terminal stretch at 1–23 (MERWTGRVALVTGASVGIGAAVA) is a signal peptide. Residues 13 to 18 (GASVGI), 38 to 39 (RS), glutamate 44, 65 to 66 (DL), and asparagine 92 contribute to the NADP(+) site. 2 residues coordinate substrate: serine 146 and tyrosine 161. Residues tyrosine 161, lysine 165, 196-199 (VETG), and lysine 203 contribute to the NADP(+) site. Tyrosine 161 (proton acceptor) is an active-site residue.

Belongs to the short-chain dehydrogenases/reductases (SDR) family.

It localises to the secreted. It carries out the reaction a 3beta-hydroxysteroid + NADP(+) = a 3-oxosteroid + NADPH + H(+). It catalyses the reaction 17beta-estradiol + NAD(+) = estrone + NADH + H(+). The enzyme catalyses 17beta-estradiol + NADP(+) = estrone + NADPH + H(+). Its pathway is steroid biosynthesis; estrogen biosynthesis. Its activity is regulated as follows. Inhibited by flavonoids including apigenin, luteolin, genistein, kaempferol and quercetin and also by carbenoxolone, zearalenone, glycyrrhetinic, curcumin and flufenamic acid. Catalyzes the conversion of the 17-keto group of estrone, 4- and 5-androstenes and 5-alpha-androstanes into their 17-beta-hydroxyl metabolites and the conversion of the 3-keto group of 3-, 3,17- and 3,20- diketosteroids into their 3-hydroxyl metabolites. Exhibits reductive 3-beta-hydroxysteroid dehydrogenase activity toward 5-beta-androstanes, 5-beta-pregnanes, 4-pregnenes and bile acids. May also reduce endogenous and exogenous alpha-dicarbonyl compounds and xenobiotic alicyclic ketones. This chain is Dehydrogenase/reductase SDR family member 11 (DHRS11), found in Gallus gallus (Chicken).